Reading from the N-terminus, the 257-residue chain is uncharacterized protein (257 aa).

This is an uncharacterized protein from Acidianus bottle-shaped virus (isolate Italy/Pozzuoli) (ABV).